Here is a 231-residue protein sequence, read N- to C-terminus: L-ribulose-5-phosphate 4-epimerase (231 aa).

Substrate contacts are provided by residues 27–28 (GN), 44–45 (SG), and 74–75 (SS). Zn(2+) is bound by residues Asp76, His95, and His97. Asp120 acts as the Proton donor/acceptor in catalysis. Zn(2+) is bound at residue His171. Tyr229 acts as the Proton donor/acceptor in catalysis.

Belongs to the aldolase class II family. AraD/FucA subfamily. Homotetramer. The cofactor is Zn(2+).

It carries out the reaction L-ribulose 5-phosphate = D-xylulose 5-phosphate. It functions in the pathway carbohydrate degradation; L-arabinose degradation via L-ribulose; D-xylulose 5-phosphate from L-arabinose (bacterial route): step 3/3. Its function is as follows. Involved in the degradation of L-arabinose. Catalyzes the interconversion of L-ribulose 5-phosphate (LRu5P) and D-xylulose 5-phosphate (D-Xu5P) via a retroaldol/aldol mechanism (carbon-carbon bond cleavage analogous to a class II aldolase reaction). This is L-ribulose-5-phosphate 4-epimerase from Salmonella typhimurium (strain LT2 / SGSC1412 / ATCC 700720).